Reading from the N-terminus, the 159-residue chain is Putative pre-16S rRNA nuclease (159 aa).

The protein belongs to the YqgF nuclease family.

Its subcellular location is the cytoplasm. Functionally, could be a nuclease involved in processing of the 5'-end of pre-16S rRNA. The polypeptide is Putative pre-16S rRNA nuclease (Thermobifida fusca (strain YX)).